The chain runs to 92 residues: Small ribosomal subunit protein uS19c (92 aa).

It belongs to the universal ribosomal protein uS19 family.

It localises to the plastid. The protein resides in the chloroplast. Its function is as follows. Protein S19 forms a complex with S13 that binds strongly to the 16S ribosomal RNA. In Staurastrum punctulatum (Green alga), this protein is Small ribosomal subunit protein uS19c.